A 130-amino-acid polypeptide reads, in one-letter code: Protein AUXIN-REGULATED GENE INVOLVED IN ORGAN SIZE (130 aa).

An organ Size Related (OSR) domain region spans residues 65–116 (FSLESLFLLVGLTASLLILPLVLPPLPPPPFMLLLVPIGIMVLLVVLAFMPS). Helical transmembrane passes span 70–90 (LFLL…LPPL) and 94–114 (PFML…LAFM).

It belongs to the plant organ size related (OSR) protein family. In terms of tissue distribution, mostly expressed in flowers, inflorescence stems, leaf primordia and young leaves, and, to a lower extent, in siliques, cotyledon vascular bundles, roots (pericycle and root tips) and mature leaves.

The protein resides in the membrane. It is found in the nucleus. The protein localises to the cytoplasm. It localises to the endoplasmic reticulum. Promotes cell proliferation-dependent organ growth. Takes part in the AXR1-dependent auxin signaling pathway that requires ANT during organogenesis. This Arabidopsis thaliana (Mouse-ear cress) protein is Protein AUXIN-REGULATED GENE INVOLVED IN ORGAN SIZE (ARGOS).